Reading from the N-terminus, the 374-residue chain is Organelle RRM domain-containing protein 1, chloroplastic (374 aa).

Residues 1-54 (MEALIASTSFFVPISNSSSSHIINNRFFPSFYSPNLNFGTFRKTSLSSSHLVFS) constitute a chloroplast transit peptide. Positions 258 to 271 (KDYEGDSTQDSRDQ) are enriched in basic and acidic residues. Residues 258–279 (KDYEGDSTQDSRDQDDSESPPV) form a disordered region. Residues 282–360 (KKLFITGLSF…WMIVVDVAKT (79 aa)) enclose the RRM domain.

In terms of assembly, interacts with PCMP-H51/CRR28 and PCMP-H12/OTP82. Interacts with MORF8/RIP1, MORF2/RIP2 and VAR3/OZ1.

The protein localises to the plastid. It is found in the chloroplast. In terms of biological role, involved in C-to-U editing of chloroplastic RNA. Functions as major chloroplastic editing factor. Controls 62 percent of the chloroplastic editing sites. Binds RNA close to ORRM1-dependent editing sites in vitro. Binds the editing recognition trans-factors PCMP-H51/CRR28 and PCMP-H12/OTP82. The chain is Organelle RRM domain-containing protein 1, chloroplastic from Arabidopsis thaliana (Mouse-ear cress).